Reading from the N-terminus, the 366-residue chain is Major outer membrane protein (366 aa).

An N-terminal signal peptide occupies residues 1 to 21; that stretch reads MKKTLLATAIAGAMAASGAQA.

Belongs to the Gram-negative porin family. Homotrimer.

It is found in the cell outer membrane. The sequence is that of Major outer membrane protein from Halomonas elongata (strain ATCC 33173 / DSM 2581 / NBRC 15536 / NCIMB 2198 / 1H9).